A 193-amino-acid polypeptide reads, in one-letter code: Cilia- and flagella-associated protein 20 (193 aa).

It belongs to the CFAP20 family.

The protein resides in the nucleus. It localises to the cytoplasm. Its subcellular location is the cytoskeleton. It is found in the microtubule organizing center. The protein localises to the centrosome. The protein resides in the centriole. It localises to the cilium basal body. Its subcellular location is the cilium axoneme. Cilium- and flagellum-specific protein that plays a role in axonemal structure organization and motility. Microtubule inner protein (MIP) part of the dynein-decorated doublet microtubules (DMTs) in cilia axoneme, which is required for motile cilia beating. Involved in the regulation of the size and morphology of cilia. Required for axonemal microtubules polyglutamylation. In Xenopus laevis (African clawed frog), this protein is Cilia- and flagella-associated protein 20 (cfap20).